The primary structure comprises 642 residues: MAADAKKETIRLTTAQALVRFLNQQYIDVDGQVTSFVEGLFAIFGHGNVLGLGEALQEDPGHLKVYQGHNEQGMASTAIAYSRQLYRHKIFAVTASAGPGSANFVTAAGNAYVNSIPILFLPADTFATRQPDPVLQQIEVDYSADTTTNDVLKPVSKYWDRIERPEQLMSALLKAFEVLTNPATAGPVTIALPQDVEGQAYDYPLSFFKKRVHVVKRVQPSSAELAGAVELIQASQTPVLIVGGGAKFSDAGAAIETFSERFNIPIVETPTGKSAISSDFPNNMGGTGILGTAAANAVITKADLIIGAGTRYTDFTTASKTAIHPGKTQLININLNRMQSYKFDAFPIVADVRDTLSQLTESLSDYRSQFTDLATIKEAWQKERQRLAHTNYDAPAYVPEVKNQFDAKTMAAYAEKLQTHLTQTEAVIAVNNTIDPTSIIVAAAGSLPGDVQRIWDPVVPNTYHMEYGYSMMGYEVPAALGIKLAQPDQESYALVGDGSFMMLHSELVTALQYHKKINILVFDNSGFASINNLQMAQGSNSYLTEFRTSDNDIMKTDFAKIAEGYGAKAYRANDRKSLIAAIEDAKKQTVSTLIDIKVLPKTMTQGYGQSWWRVGVSEISNNPKVQKAYQDIQTGIDKAFKY.

Glu71 contacts thiamine diphosphate. The segment at 446–526 (SLPGDVQRIW…INILVFDNSG (81 aa)) is thiamine pyrophosphate binding. Asp497 and Asn524 together coordinate Mg(2+).

The protein belongs to the TPP enzyme family. Mg(2+) serves as cofactor. The cofactor is thiamine diphosphate.

The enzyme catalyses 3D-3,5/4-trihydroxycyclohexane-1,2-dione + H2O = 5-deoxy-D-glucuronate + H(+). Its pathway is polyol metabolism; myo-inositol degradation into acetyl-CoA; acetyl-CoA from myo-inositol: step 3/7. Involved in the cleavage of the C1-C2 bond of 3D-(3,5/4)-trihydroxycyclohexane-1,2-dione (THcHDO) to yield 5-deoxy-glucuronate (5DG). The polypeptide is 3D-(3,5/4)-trihydroxycyclohexane-1,2-dione hydrolase (Lacticaseibacillus casei (Lactobacillus casei)).